Consider the following 443-residue polypeptide: Threonine/serine transporter TdcC (443 aa).

Transmembrane regions (helical) follow at residues 22 to 42 (TTWT…FFPI), 44 to 64 (AGFG…PIAF), 97 to 117 (GVVI…IYGV), 140 to 160 (FVAL…KDLM), 163 to 183 (VMSY…LSLI), 207 to 227 (ILIT…FSPI), 261 to 281 (MLMV…LSPA), 311 to 331 (FAIT…FKSF), 366 to 386 (ISMI…PNIL), 389 to 409 (IEAM…MYAI), and 423 to 443 (DNVF…YKLF).

This sequence belongs to the amino acid/polyamine transporter 2 family. SdaC/TdcC subfamily.

The protein resides in the cell inner membrane. The enzyme catalyses L-threonine(in) + H(+)(in) = L-threonine(out) + H(+)(out). It carries out the reaction L-serine(in) + H(+)(in) = L-serine(out) + H(+)(out). Its function is as follows. Involved in the import of threonine and serine into the cell, with the concomitant import of a proton (symport system). The sequence is that of Threonine/serine transporter TdcC from Shigella boydii serotype 18 (strain CDC 3083-94 / BS512).